Here is a 276-residue protein sequence, read N- to C-terminus: Odontogenic ameloblast-associated protein (276 aa).

The first 15 residues, 1–15 (MRTLILLGILGATMS), serve as a signal peptide directing secretion. Threonine 101, threonine 113, and threonine 117 each carry an O-linked (GalNAc...) threonine glycan. Residues 125 to 127 (MPS) form an interaction with ARHGEF5 region. O-linked (GalNAc...) serine glycosylation occurs at serine 246. Residues threonine 247, threonine 248, and threonine 252 are each glycosylated (O-linked (GalNAc...) threonine). Serine 253 carries an O-linked (GalNAc...) serine glycan. 4 O-linked (GalNAc...) threonine glycosylation sites follow: threonine 254, threonine 258, threonine 260, and threonine 270. Serine 272 carries an O-linked (GalNAc...) serine glycan.

This sequence belongs to the ODAM family. Interacts (via C-terminus) with ARHGEF5. Post-translationally, O-glycosylated.

It localises to the secreted. The protein resides in the cytoplasm. It is found in the nucleus. Tooth-associated epithelia protein that probably plays a role in odontogenesis, the complex process that results in the initiation and generation of the tooth. May be incorporated in the enamel matrix at the end of mineralization process. Involved in the induction of RHOA activity via interaction with ARHGEF and expression of downstream factors such as ROCK. Plays a role in attachment of the junctional epithelium to the tooth surface. The protein is Odontogenic ameloblast-associated protein (ODAM) of Sus scrofa (Pig).